Here is a 105-residue protein sequence, read N- to C-terminus: Large ribosomal subunit protein bL21 (105 aa).

It belongs to the bacterial ribosomal protein bL21 family. In terms of assembly, part of the 50S ribosomal subunit. Contacts protein L20.

In terms of biological role, this protein binds to 23S rRNA in the presence of protein L20. In Rickettsia prowazekii (strain Madrid E), this protein is Large ribosomal subunit protein bL21.